We begin with the raw amino-acid sequence, 491 residues long: MKTIIDNFVDRVIEYGMYNEIDKIYVKNRVLALIGEEGIDRISDENDLKQIKDYLVEIALKNGKIKDLIEEKECLGAELMNFIVPLPSRLNDIFWSSYDISPQEAVEEFYKLSKDSDYIKTSAIAKNIEFRASTKYGELEITINLSKPEKDPKTIAAEKLVKATNYPKCLLCMENEGYQGRINYPARSNHRIIRLKLGDEVWGFQYSPYSYFNEHAIFLNSQHVPMAITSKTFEQLLEIVDILPGYFAGSNSDLPISGGSILSHNHYQGGKHIFPMEKAKFESEFCFKDFEDVNAGIVKWPMSVIRLQSENKNRLLDLATKILNKWREYSDLEVDIIAMTEDVPHHTVTPIARKVDGRYELDIVLRDNHTTEQYPDGVFHPHQDVQHIKKENIGLIEVMGLAILPPRLKPELEEVGKYLLGEDNAIADYHLEWADQLKEKYPRINKEEVNSVVQHEAGQVFARVLEDAGVYKNTPSGHEAFMRFVKSVGIN.

This sequence belongs to the galactose-1-phosphate uridylyltransferase type 2 family.

It is found in the cytoplasm. The enzyme catalyses alpha-D-galactose 1-phosphate + UDP-alpha-D-glucose = alpha-D-glucose 1-phosphate + UDP-alpha-D-galactose. The protein operates within carbohydrate metabolism; galactose metabolism. This chain is Galactose-1-phosphate uridylyltransferase 1 (galT1), found in Streptococcus pneumoniae serotype 4 (strain ATCC BAA-334 / TIGR4).